A 206-amino-acid chain; its full sequence is Small ribosomal subunit protein uS3 (206 aa).

Positions 39-107 (IRSYINESFK…SVEVNVVGVK (69 aa)) constitute a KH type-2 domain.

The protein belongs to the universal ribosomal protein uS3 family. As to quaternary structure, part of the 30S ribosomal subunit. Forms a tight complex with proteins S10 and S14.

Its function is as follows. Binds the lower part of the 30S subunit head. Binds mRNA in the 70S ribosome, positioning it for translation. This chain is Small ribosomal subunit protein uS3, found in Wolbachia pipientis subsp. Culex pipiens (strain wPip).